Here is a 382-residue protein sequence, read N- to C-terminus: Anhydro-N-acetylmuramic acid kinase (382 aa).

Residue 18-25 coordinates ATP; that stretch reads GTSLDGVD.

This sequence belongs to the anhydro-N-acetylmuramic acid kinase family.

The enzyme catalyses 1,6-anhydro-N-acetyl-beta-muramate + ATP + H2O = N-acetyl-D-muramate 6-phosphate + ADP + H(+). It participates in amino-sugar metabolism; 1,6-anhydro-N-acetylmuramate degradation. The protein operates within cell wall biogenesis; peptidoglycan recycling. Functionally, catalyzes the specific phosphorylation of 1,6-anhydro-N-acetylmuramic acid (anhMurNAc) with the simultaneous cleavage of the 1,6-anhydro ring, generating MurNAc-6-P. Is required for the utilization of anhMurNAc either imported from the medium or derived from its own cell wall murein, and thus plays a role in cell wall recycling. This Ralstonia nicotianae (strain ATCC BAA-1114 / GMI1000) (Ralstonia solanacearum) protein is Anhydro-N-acetylmuramic acid kinase.